A 682-amino-acid polypeptide reads, in one-letter code: Methionine--tRNA ligase (682 aa).

The short motif at 14–24 (PYANGPVHLGH) is the 'HIGH' region element. Positions 145, 148, 158, and 161 each coordinate Zn(2+). Positions 331–335 (KMSKS) match the 'KMSKS' region motif. K334 serves as a coordination point for ATP. Positions 580–682 (AFAAVDLRVA…SGAKPGQRIK (103 aa)) constitute a tRNA-binding domain.

The protein belongs to the class-I aminoacyl-tRNA synthetase family. MetG type 1 subfamily. Homodimer. It depends on Zn(2+) as a cofactor.

The protein resides in the cytoplasm. It catalyses the reaction tRNA(Met) + L-methionine + ATP = L-methionyl-tRNA(Met) + AMP + diphosphate. Its function is as follows. Is required not only for elongation of protein synthesis but also for the initiation of all mRNA translation through initiator tRNA(fMet) aminoacylation. This is Methionine--tRNA ligase from Pseudomonas syringae pv. tomato (strain ATCC BAA-871 / DC3000).